The primary structure comprises 179 residues: Large ribosomal subunit protein uL5 (179 aa).

This sequence belongs to the universal ribosomal protein uL5 family. In terms of assembly, part of the 50S ribosomal subunit; part of the 5S rRNA/L5/L18/L25 subcomplex. Contacts the 5S rRNA and the P site tRNA. Forms a bridge to the 30S subunit in the 70S ribosome.

In terms of biological role, this is one of the proteins that bind and probably mediate the attachment of the 5S RNA into the large ribosomal subunit, where it forms part of the central protuberance. In the 70S ribosome it contacts protein S13 of the 30S subunit (bridge B1b), connecting the 2 subunits; this bridge is implicated in subunit movement. Contacts the P site tRNA; the 5S rRNA and some of its associated proteins might help stabilize positioning of ribosome-bound tRNAs. This Staphylococcus carnosus (strain TM300) protein is Large ribosomal subunit protein uL5.